A 380-amino-acid chain; its full sequence is MSAVNGTPWGSSAREEVWAGSGVEVEGSELPTFSTAAKVRVGVTIVLFVSSAGGNLAVLWSVTRPQPSQLRPSPVRRLFAHLAAADLLVTFVVMPLDATWNITVQWLAGDIACRTLMFLKLMAMYAAAFLPVVIGLDRQAAVLNPLGSRSGVRKLLGAAWGLSFLLALPQLFLFHTVHRAGPVPFTQCATKGSFKARWQETTYNLFTFCCLFLLPLTAMAICYSRIVLGVSSPRTRKGSHAPAGEFALRRSFDNRPRVRLRALRLALLVLLTFILCWTPYYLLGLWYWFSPSMLSEVPPSLSHILFLFGLLNAPLDPLLYGAFTLGCRRGHQELSMDSSREEGSRRMFQQDIQALRQTEVQKTVTSRKAGETKDIPITSI.

Residues 1–40 are Extracellular-facing; sequence MSAVNGTPWGSSAREEVWAGSGVEVEGSELPTFSTAAKVR. The helical transmembrane segment at 41–60 threads the bilayer; it reads VGVTIVLFVSSAGGNLAVLW. Residues 61–76 lie on the Cytoplasmic side of the membrane; that stretch reads SVTRPQPSQLRPSPVR. A helical membrane pass occupies residues 77-96; the sequence is RLFAHLAAADLLVTFVVMPL. Topologically, residues 97 to 114 are extracellular; that stretch reads DATWNITVQWLAGDIACR. A glycan (N-linked (GlcNAc...) asparagine) is linked at Asn101. Cysteines 113 and 188 form a disulfide. Residues 115–136 traverse the membrane as a helical segment; that stretch reads TLMFLKLMAMYAAAFLPVVIGL. Over 137 to 160 the chain is Cytoplasmic; sequence DRQAAVLNPLGSRSGVRKLLGAAW. A helical membrane pass occupies residues 161–178; the sequence is GLSFLLALPQLFLFHTVH. The Extracellular portion of the chain corresponds to 179 to 204; that stretch reads RAGPVPFTQCATKGSFKARWQETTYN. A helical transmembrane segment spans residues 205-224; it reads LFTFCCLFLLPLTAMAICYS. Residues 225-278 are Cytoplasmic-facing; sequence RIVLGVSSPRTRKGSHAPAGEFALRRSFDNRPRVRLRALRLALLVLLTFILCWT. The chain crosses the membrane as a helical span at residues 279-297; that stretch reads PYYLLGLWYWFSPSMLSEV. Topologically, residues 298-303 are extracellular; the sequence is PPSLSH. Residues 304 to 323 form a helical membrane-spanning segment; the sequence is ILFLFGLLNAPLDPLLYGAF. The Cytoplasmic segment spans residues 324-380; it reads TLGCRRGHQELSMDSSREEGSRRMFQQDIQALRQTEVQKTVTSRKAGETKDIPITSI.

Belongs to the G-protein coupled receptor 1 family. Post-translationally, phosphorylated on the C-terminal cytoplasmic tail.

The protein localises to the cell membrane. Receptor for gonadotropin releasing hormone II (GnRH II). This receptor mediates its action by association with G proteins that activate a phosphatidylinositol-calcium second messenger system. The protein is Gonadotropin-releasing hormone II receptor (GNRHR2) of Callithrix jacchus (White-tufted-ear marmoset).